Here is a 1190-residue protein sequence, read N- to C-terminus: PAN2-PAN3 deadenylation complex catalytic subunit PAN2 (1190 aa).

WD repeat units follow at residues 24-63 (TTIVNITSLQFDSVQNFIWCGDSRGYTRSFTGSFATNSLY), 129-166 (NKFNNLQAMTFNCNSFNDVVVGTDTSMMKFDLNKPNVL), 167-207 (SSFD…TMKT), 222-264 (GNYI…AIAP), 266-306 (PFPA…NVYL), and 322-361 (NNKPRMSNLEISENGDFLVFNDNCDNMHLWSISPSSKDFV). A linker region spans residues 364-511 (PQPVEQPDII…FQYKFQGKLN (148 aa)). Residues 512-924 (KVPNCYSRLQ…KPIVIMYQQT (413 aa)) form the USP domain. The Exonuclease domain occupies 988-1158 (VAIDAEFVML…EDANTALLLY (171 aa)). 4 residues coordinate a divalent metal cation: D991, E993, D1097, and D1150.

Belongs to the peptidase C19 family. PAN2 subfamily. Forms a heterotrimer with an asymmetric homodimer of the regulatory subunit PAN3 to form the poly(A)-nuclease (PAN) deadenylation complex. A divalent metal cation serves as cofactor.

The protein localises to the cytoplasm. It carries out the reaction Exonucleolytic cleavage of poly(A) to 5'-AMP.. Positively regulated by the regulatory subunit PAN3. Its function is as follows. Catalytic subunit of the poly(A)-nuclease (PAN) deadenylation complex, one of two cytoplasmic mRNA deadenylases involved in mRNA turnover. PAN specifically shortens poly(A) tails of RNA and the activity is stimulated by poly(A)-binding protein PAB1. PAN deadenylation is followed by rapid degradation of the shortened mRNA tails by the CCR4-NOT complex. Deadenylated mRNAs are then degraded by two alternative mechanisms, namely exosome-mediated 3'-5' exonucleolytic degradation, or deadenylation-dependent mRNA decaping and subsequent 5'-3' exonucleolytic degradation by XRN1. May also be involved in post-transcriptional maturation of mRNA poly(A) tails. In Candida albicans (strain SC5314 / ATCC MYA-2876) (Yeast), this protein is PAN2-PAN3 deadenylation complex catalytic subunit PAN2.